We begin with the raw amino-acid sequence, 155 residues long: Mediator of RNA polymerase II transcription subunit 10 (155 aa).

Residues 54 to 80 (SSHTQSHAPDADTAQANPSDPPISTIE) form a disordered region.

Belongs to the Mediator complex subunit 10 family. In terms of assembly, component of the Mediator complex.

It is found in the nucleus. In terms of biological role, component of the Mediator complex, a coactivator involved in the regulated transcription of nearly all RNA polymerase II-dependent genes. Mediator functions as a bridge to convey information from gene-specific regulatory proteins to the basal RNA polymerase II transcription machinery. Mediator is recruited to promoters by direct interactions with regulatory proteins and serves as a scaffold for the assembly of a functional preinitiation complex with RNA polymerase II and the general transcription factors. The sequence is that of Mediator of RNA polymerase II transcription subunit 10 (nut2) from Aspergillus terreus (strain NIH 2624 / FGSC A1156).